A 158-amino-acid chain; its full sequence is 6,7-dimethyl-8-ribityllumazine synthase (158 aa).

5-amino-6-(D-ribitylamino)uracil-binding positions include Phe-22, 56-58 (ALE), and 80-82 (VVI). 85 to 86 (ET) serves as a coordination point for (2S)-2-hydroxy-3-oxobutyl phosphate. His-88 (proton donor) is an active-site residue. Asn-113 contacts 5-amino-6-(D-ribitylamino)uracil. Arg-127 is a (2S)-2-hydroxy-3-oxobutyl phosphate binding site.

Belongs to the DMRL synthase family.

The catalysed reaction is (2S)-2-hydroxy-3-oxobutyl phosphate + 5-amino-6-(D-ribitylamino)uracil = 6,7-dimethyl-8-(1-D-ribityl)lumazine + phosphate + 2 H2O + H(+). It functions in the pathway cofactor biosynthesis; riboflavin biosynthesis; riboflavin from 2-hydroxy-3-oxobutyl phosphate and 5-amino-6-(D-ribitylamino)uracil: step 1/2. Its function is as follows. Catalyzes the formation of 6,7-dimethyl-8-ribityllumazine by condensation of 5-amino-6-(D-ribitylamino)uracil with 3,4-dihydroxy-2-butanone 4-phosphate. This is the penultimate step in the biosynthesis of riboflavin. This chain is 6,7-dimethyl-8-ribityllumazine synthase, found in Neisseria meningitidis serogroup C (strain 053442).